The sequence spans 269 residues: uncharacterized protein (269 aa).

6 helical membrane passes run 21–43 (LNVW…ILFT), 48–70 (LFLI…FSLI), 121–143 (YLIL…VFTF), 147–166 (FIIA…FWII), 205–227 (SLEV…LFQF), and 242–264 (FVAF…YLLW).

It localises to the cell membrane. This is an uncharacterized protein from Aquifex aeolicus (strain VF5).